We begin with the raw amino-acid sequence, 333 residues long: Phosphoribosylformylglycinamidine cyclo-ligase (333 aa).

This sequence belongs to the AIR synthase family.

The protein localises to the cytoplasm. It carries out the reaction 2-formamido-N(1)-(5-O-phospho-beta-D-ribosyl)acetamidine + ATP = 5-amino-1-(5-phospho-beta-D-ribosyl)imidazole + ADP + phosphate + H(+). Its pathway is purine metabolism; IMP biosynthesis via de novo pathway; 5-amino-1-(5-phospho-D-ribosyl)imidazole from N(2)-formyl-N(1)-(5-phospho-D-ribosyl)glycinamide: step 2/2. The protein is Phosphoribosylformylglycinamidine cyclo-ligase of Clostridium perfringens (strain 13 / Type A).